The sequence spans 395 residues: S-adenosylmethionine synthase (395 aa).

Histidine 15 serves as a coordination point for ATP. Aspartate 17 lines the Mg(2+) pocket. Glutamate 43 provides a ligand contact to K(+). Residue glutamine 99 coordinates L-methionine. Residues 99–109 (QSPDIAMGVNE) are flexible loop. Residues 174–176 (DGK), 240–241 (RF), aspartate 249, 255–256 (RK), alanine 272, and lysine 276 each bind ATP. L-methionine is bound at residue aspartate 249. L-methionine is bound at residue lysine 280.

Belongs to the AdoMet synthase family. In terms of assembly, homotetramer; dimer of dimers. The cofactor is Mg(2+). K(+) serves as cofactor.

The protein resides in the cytoplasm. It carries out the reaction L-methionine + ATP + H2O = S-adenosyl-L-methionine + phosphate + diphosphate. It participates in amino-acid biosynthesis; S-adenosyl-L-methionine biosynthesis; S-adenosyl-L-methionine from L-methionine: step 1/1. Its function is as follows. Catalyzes the formation of S-adenosylmethionine (AdoMet) from methionine and ATP. The overall synthetic reaction is composed of two sequential steps, AdoMet formation and the subsequent tripolyphosphate hydrolysis which occurs prior to release of AdoMet from the enzyme. The polypeptide is S-adenosylmethionine synthase (Moorella thermoacetica (strain ATCC 39073 / JCM 9320)).